A 243-amino-acid chain; its full sequence is Cell division protein ZipA (243 aa).

Residues methionine 1–valine 4 lie on the Periplasmic side of the membrane. A helical membrane pass occupies residues threonine 5 to phenylalanine 25. The Cytoplasmic portion of the chain corresponds to serine 26–tryptophan 243. A disordered region spans residues alanine 32–lysine 89. The span at lysine 38–proline 49 shows a compositional bias: basic and acidic residues.

It belongs to the ZipA family. In terms of assembly, interacts with FtsZ via their C-terminal domains.

The protein resides in the cell inner membrane. Functionally, essential cell division protein that stabilizes the FtsZ protofilaments by cross-linking them and that serves as a cytoplasmic membrane anchor for the Z ring. Also required for the recruitment to the septal ring of downstream cell division proteins. This is Cell division protein ZipA from Xylella fastidiosa (strain Temecula1 / ATCC 700964).